Here is a 54-residue protein sequence, read N- to C-terminus: Large ribosomal subunit protein bL33 (54 aa).

This sequence belongs to the bacterial ribosomal protein bL33 family.

The sequence is that of Large ribosomal subunit protein bL33 from Chloroflexus aurantiacus (strain ATCC 29366 / DSM 635 / J-10-fl).